The following is a 154-amino-acid chain: Histone H2B type F-M (154 aa).

The segment covering 1 to 18 (MAAASAMAEASSETTSEE) has biased composition (low complexity). Residues 1–61 (MAAASAMAEA…RGDSFGDSFT (61 aa)) form a disordered region. Basic residues predominate over residues 34–50 (QKQKRRGCRGSRRRHAN).

Belongs to the histone H2B family. In terms of assembly, the nucleosome is a histone octamer containing two molecules each of H2A, H2B, H3 and H4 assembled in one H3-H4 heterotetramer and two H2A-H2B heterodimers. The octamer wraps approximately 147 bp of DNA.

It localises to the nucleus. Its subcellular location is the chromosome. Its function is as follows. Core component of nucleosome. Nucleosomes wrap and compact DNA into chromatin, limiting DNA accessibility to the cellular machineries which require DNA as a template. Histones thereby play a central role in transcription regulation, DNA repair, DNA replication and chromosomal stability. DNA accessibility is regulated via a complex set of post-translational modifications of histones, also called histone code, and nucleosome remodeling. The protein is Histone H2B type F-M of Homo sapiens (Human).